Reading from the N-terminus, the 393-residue chain is Arginine biosynthesis bifunctional protein ArgJ 3 (393 aa).

T148, K170, T181, E260, N388, and T393 together coordinate substrate. The Nucleophile role is filled by T181.

This sequence belongs to the ArgJ family. As to quaternary structure, heterotetramer of two alpha and two beta chains.

It localises to the cytoplasm. The catalysed reaction is N(2)-acetyl-L-ornithine + L-glutamate = N-acetyl-L-glutamate + L-ornithine. It carries out the reaction L-glutamate + acetyl-CoA = N-acetyl-L-glutamate + CoA + H(+). It functions in the pathway amino-acid biosynthesis; L-arginine biosynthesis; L-ornithine and N-acetyl-L-glutamate from L-glutamate and N(2)-acetyl-L-ornithine (cyclic): step 1/1. It participates in amino-acid biosynthesis; L-arginine biosynthesis; N(2)-acetyl-L-ornithine from L-glutamate: step 1/4. Its function is as follows. Catalyzes two activities which are involved in the cyclic version of arginine biosynthesis: the synthesis of N-acetylglutamate from glutamate and acetyl-CoA as the acetyl donor, and of ornithine by transacetylation between N(2)-acetylornithine and glutamate. The protein is Arginine biosynthesis bifunctional protein ArgJ 3 of Streptomyces clavuligerus.